The following is a 247-amino-acid chain: Protein LIFEGUARD 4 (247 aa).

A run of 7 helical transmembrane segments spans residues 42–62, 75–95, 105–125, 130–150, 165–185, 188–208, and 222–242; these read VYSI…TVVF, AGLA…CPLY, YLLL…TCAF, VILE…VYTF, FLFG…FFPL, ISVM…IVYD, and IWAA…LLTI.

This sequence belongs to the BI1 family.

The protein localises to the membrane. The sequence is that of Protein LIFEGUARD 4 from Arabidopsis thaliana (Mouse-ear cress).